The following is a 78-amino-acid chain: Sec-independent protein translocase protein TatA (78 aa).

A helical transmembrane segment spans residues 1–21 (MFGRIGLPEILLILAIALIIF). Residues 50–78 (EVNEVEEEVKENKSSDVKENEDNKTEKST) are disordered. The span at 59–78 (KENKSSDVKENEDNKTEKST) shows a compositional bias: basic and acidic residues.

It belongs to the TatA/E family. Forms a complex with TatC.

The protein resides in the cell membrane. In terms of biological role, part of the twin-arginine translocation (Tat) system that transports large folded proteins containing a characteristic twin-arginine motif in their signal peptide across membranes. TatA could form the protein-conducting channel of the Tat system. This chain is Sec-independent protein translocase protein TatA, found in Natranaerobius thermophilus (strain ATCC BAA-1301 / DSM 18059 / JW/NM-WN-LF).